A 497-amino-acid chain; its full sequence is Glycerol kinase (497 aa).

Threonine 12 lines the ADP pocket. The ATP site is built by threonine 12, threonine 13, and serine 14. Threonine 12 lines the sn-glycerol 3-phosphate pocket. Residue arginine 16 coordinates ADP. Arginine 82, glutamate 83, tyrosine 134, and aspartate 243 together coordinate sn-glycerol 3-phosphate. Glycerol is bound by residues arginine 82, glutamate 83, tyrosine 134, aspartate 243, and glutamine 244. Positions 265 and 308 each coordinate ADP. ATP contacts are provided by threonine 265, glycine 308, glutamine 312, and glycine 409. Positions 409 and 413 each coordinate ADP.

This sequence belongs to the FGGY kinase family.

It carries out the reaction glycerol + ATP = sn-glycerol 3-phosphate + ADP + H(+). It functions in the pathway polyol metabolism; glycerol degradation via glycerol kinase pathway; sn-glycerol 3-phosphate from glycerol: step 1/1. Inhibited by fructose 1,6-bisphosphate (FBP). Key enzyme in the regulation of glycerol uptake and metabolism. Catalyzes the phosphorylation of glycerol to yield sn-glycerol 3-phosphate. The chain is Glycerol kinase from Nitratidesulfovibrio vulgaris (strain DSM 19637 / Miyazaki F) (Desulfovibrio vulgaris).